The following is an 836-amino-acid chain: Enhancer of polycomb homolog 1 (836 aa).

Residue Lys-319 forms a Glycyl lysine isopeptide (Lys-Gly) (interchain with G-Cter in SUMO2) linkage. 2 disordered regions span residues 335–360 (KRKY…SPAA) and 372–401 (YDFP…PDGP). Residues 346–360 (PSSAAATPQQTSPAA) are compositionally biased toward low complexity. Ser-539 carries the phosphoserine modification. Lys-673 is covalently cross-linked (Glycyl lysine isopeptide (Lys-Gly) (interchain with G-Cter in SUMO2)). The segment at 802 to 829 (VPSSSSVDSVPRENHESEKPALNNIADN) is disordered. The span at 811-820 (VPRENHESEK) shows a compositional bias: basic and acidic residues.

Belongs to the enhancer of polycomb family. In terms of assembly, component of the NuA4 histone acetyltransferase complex which contains the catalytic subunit KAT5/TIP60 and the subunits EP400, TRRAP/PAF400, BRD8/SMAP, EPC1, DMAP1/DNMAP1, RUVBL1/TIP49, RUVBL2, ING3, actin, ACTL6A/BAF53A, MORF4L1/MRG15, MORF4L2/MRGX, MRGBP, YEATS4/GAS41, VPS72/YL1 and MEAF6. KAT5/TIP60, EPC1, and ING3 together constitute a minimal HAT complex termed Piccolo NuA4. Component of a NuA4-related complex which contains EP400, TRRAP/PAF400, SRCAP, BRD8/SMAP, EPC1, DMAP1/DNMAP1, RUVBL1/TIP49, RUVBL2, actin, ACTL6A/BAF53A, VPS72 and YEATS4/GAS41. Interacts with TRIM27. Interacts with MBTD1; interaction is direct and promotes recruitment of MBTD1 into the NuA4 histone acetyltransferase complex.

Its subcellular location is the nucleus. The protein resides in the cytoplasm. In terms of biological role, component of the NuA4 histone acetyltransferase (HAT) complex, a multiprotein complex involved in transcriptional activation of select genes principally by acetylation of nucleosomal histones H4 and H2A. The NuA4 complex plays a direct role in repair of DNA double-strand breaks (DSBs) by promoting homologous recombination (HR). The NuA4 complex is also required for spermatid development by promoting acetylation of histones: histone acetylation is required for histone replacement during the transition from round to elongating spermatids. In the NuA4 complex, EPC1 is required to recruit MBTD1 into the complex. In Homo sapiens (Human), this protein is Enhancer of polycomb homolog 1.